Here is a 251-residue protein sequence, read N- to C-terminus: Octanoyltransferase (251 aa).

Residues 56 to 241 (ADTGDEIWVV…NLDGASAAAD (186 aa)) form the BPL/LPL catalytic domain. Substrate contacts are provided by residues 96-103 (RGGQITYH), 168-170 (ALG), and 181-183 (GLS). C199 serves as the catalytic Acyl-thioester intermediate.

The protein belongs to the LipB family.

The protein resides in the cytoplasm. It carries out the reaction octanoyl-[ACP] + L-lysyl-[protein] = N(6)-octanoyl-L-lysyl-[protein] + holo-[ACP] + H(+). Its pathway is protein modification; protein lipoylation via endogenous pathway; protein N(6)-(lipoyl)lysine from octanoyl-[acyl-carrier-protein]: step 1/2. Its function is as follows. Catalyzes the transfer of endogenously produced octanoic acid from octanoyl-acyl-carrier-protein onto the lipoyl domains of lipoate-dependent enzymes. Lipoyl-ACP can also act as a substrate although octanoyl-ACP is likely to be the physiological substrate. The sequence is that of Octanoyltransferase from Burkholderia cenocepacia (strain HI2424).